Reading from the N-terminus, the 97-residue chain is Carboxysome shell protein CsoS1B (97 aa).

Residues Ala8–Thr93 form the BMC domain.

This sequence belongs to the bacterial microcompartments protein family. CsoS1 subfamily. As to quaternary structure, homohexamer with a small central pore.

Its subcellular location is the carboxysome. Its function is as follows. One of shell proteins of the carboxysome, a polyhedral inclusion where RuBisCO (ribulose bisphosphate carboxylase, ccbL-ccbS) is sequestered. Assembles into hexamers which make sheets that form the facets of the polyhedral carboxysome. The shell probably limits the diffusion of CO(2) into and out of the carboxysome. The chain is Carboxysome shell protein CsoS1B from Hydrogenovibrio crunogenus (strain DSM 25203 / XCL-2) (Thiomicrospira crunogena).